A 268-amino-acid polypeptide reads, in one-letter code: Nickel import ATP-binding protein NikE (268 aa).

The ABC transporter domain maps to 4–252 (LNVSDLSHHY…SSDAGRVLQN (249 aa)). Residue 45–52 (GRSGCGKS) coordinates ATP.

Belongs to the ABC transporter superfamily. Nickel importer (TC 3.A.1.5.3) family. As to quaternary structure, the complex is composed of two ATP-binding proteins (NikD and NikE), two transmembrane proteins (NikB and NikC) and a solute-binding protein (NikA).

The protein resides in the cell inner membrane. It carries out the reaction Ni(2+)(out) + ATP + H2O = Ni(2+)(in) + ADP + phosphate + H(+). In terms of biological role, part of the ABC transporter complex NikABCDE involved in nickel import. Responsible for energy coupling to the transport system. The protein is Nickel import ATP-binding protein NikE of Shigella dysenteriae serotype 1 (strain Sd197).